We begin with the raw amino-acid sequence, 189 residues long: Elongation factor P (189 aa).

The protein belongs to the elongation factor P family.

It is found in the cytoplasm. It functions in the pathway protein biosynthesis; polypeptide chain elongation. Involved in peptide bond synthesis. Stimulates efficient translation and peptide-bond synthesis on native or reconstituted 70S ribosomes in vitro. Probably functions indirectly by altering the affinity of the ribosome for aminoacyl-tRNA, thus increasing their reactivity as acceptors for peptidyl transferase. The protein is Elongation factor P of Pseudomonas putida (strain GB-1).